Consider the following 413-residue polypeptide: BSD domain-containing protein 1-A (413 aa).

The region spanning 146 to 198 (WLAYWDPEQRKAEISELLVTSPSIRALFTKMVPAAVSHSEFWQRYFYKVHQLE) is the BSD domain. 2 stretches are compositionally biased toward basic and acidic residues: residues 208-219 (KQRADQSVHSEE) and 255-271 (HVED…RDHT). 2 disordered regions span residues 208 to 228 (KQRA…EEED) and 255 to 386 (HVED…EFDM). Over residues 274 to 287 (TSPSESSESISPIT) the composition is skewed to low complexity. Polar residues predominate over residues 297 to 322 (QTPSKEPSPGTLTVTKENTGAGTDET). Residues 342-352 (QREDPPSDLRV) are compositionally biased toward basic and acidic residues. Polar residues predominate over residues 356–375 (NSDSGKSTPSNNGQKGSSTD). Over residues 376–386 (ISEDWEKEFDM) the composition is skewed to acidic residues.

This chain is BSD domain-containing protein 1-A (bsdc1-a), found in Xenopus laevis (African clawed frog).